The primary structure comprises 169 residues: Ureidoglycolate lyase (169 aa).

This sequence belongs to the ureidoglycolate lyase family. As to quaternary structure, homodimer. Ni(2+) is required as a cofactor.

The catalysed reaction is (S)-ureidoglycolate = urea + glyoxylate. Its pathway is nitrogen metabolism; (S)-allantoin degradation. Its function is as follows. Catalyzes the catabolism of the allantoin degradation intermediate (S)-ureidoglycolate, generating urea and glyoxylate. Involved in the utilization of allantoin as nitrogen source. The polypeptide is Ureidoglycolate lyase (Brucella abortus biovar 1 (strain 9-941)).